The following is a 236-amino-acid chain: 15,16-dihydrobiliverdin:ferredoxin oxidoreductase (236 aa).

Belongs to the HY2 family.

It carries out the reaction 15,16-dihydrobiliverdin + oxidized 2[4Fe-4S]-[ferredoxin] = biliverdin IXalpha + reduced 2[4Fe-4S]-[ferredoxin] + 2 H(+). Its function is as follows. Catalyzes the two-electron reduction of biliverdin IX-alpha at the C15 methine bridge. The polypeptide is 15,16-dihydrobiliverdin:ferredoxin oxidoreductase (Prochlorococcus marinus (strain MIT 9515)).